The following is a 289-amino-acid chain: MIRIAIPNKGRLYEPTISIFKDAGLPISGGAESRKLFAKTTDPDIHILFARAADIPEYVQDGAADVGITGIDLITERGAKVETLLDLKFGKASLVLAVPEDSDFQKAEDLEGRKIATEFPEITHQYFKKHGVNVEVIKVSGACEMTPHVGIADAIVDISSSGTTMMINHLKPIETVFSSTVYLIANKESLRTKEKILDIKTALESVLNAKDRRYLMMNVPESSLQAVKEVLPGMSGPTVMKVESSKLPGESILAVHAVVDADLIFTIVNKLKKVGARDVLVVPIERIMP.

Belongs to the ATP phosphoribosyltransferase family. Long subfamily. Mg(2+) is required as a cofactor.

Its subcellular location is the cytoplasm. It catalyses the reaction 1-(5-phospho-beta-D-ribosyl)-ATP + diphosphate = 5-phospho-alpha-D-ribose 1-diphosphate + ATP. It participates in amino-acid biosynthesis; L-histidine biosynthesis; L-histidine from 5-phospho-alpha-D-ribose 1-diphosphate: step 1/9. Its activity is regulated as follows. Feedback inhibited by histidine. Functionally, catalyzes the condensation of ATP and 5-phosphoribose 1-diphosphate to form N'-(5'-phosphoribosyl)-ATP (PR-ATP). Has a crucial role in the pathway because the rate of histidine biosynthesis seems to be controlled primarily by regulation of HisG enzymatic activity. This chain is ATP phosphoribosyltransferase, found in Methanosarcina barkeri (strain Fusaro / DSM 804).